A 469-amino-acid polypeptide reads, in one-letter code: Maintenance of mitochondrial morphology protein 1 (469 aa).

Residues 1 to 25 (MADEVPTAVPLATPAGSSSLSFTQG) are Lumenal-facing. The helical transmembrane segment at 26–46 (FLLGQLSIAILIFCFIKFFIF) threads the bilayer. Residues 47-469 (GEPPSADDRA…GMRWRGALPR (423 aa)) are Cytoplasmic-facing. The 240-residue stretch at 124 to 363 (QPESLDWFNV…EPRFQQIVLP (240 aa)) folds into the SMP-LTD domain. Positions 266–299 (SSSPPSTTAPMPSPTSNTHRSSSPSRPASSSGAP) are enriched in low complexity. Disordered regions lie at residues 266-304 (SSSP…HRPT) and 426-469 (EAEG…ALPR). Basic and acidic residues-rich tracts occupy residues 426 to 439 (EAEG…EIRA) and 449 to 462 (ERSR…DGMR).

It belongs to the MMM1 family. In terms of assembly, homodimer. Component of the ER-mitochondria encounter structure (ERMES) or MDM complex, composed of mmm1, MDM10, MDM12 and MDM34. A mmm1 homodimer associates with one molecule of MDM12 on each side in a pairwise head-to-tail manner, and the SMP-LTD domains of mmm1 and MDM12 generate a continuous hydrophobic tunnel for phospholipid trafficking.

The protein resides in the endoplasmic reticulum membrane. In terms of biological role, component of the ERMES/MDM complex, which serves as a molecular tether to connect the endoplasmic reticulum (ER) and mitochondria. Components of this complex are involved in the control of mitochondrial shape and protein biogenesis, and function in nonvesicular lipid trafficking between the ER and mitochondria. The MDM12-mmm1 subcomplex functions in the major beta-barrel assembly pathway that is responsible for biogenesis of all outer membrane beta-barrel proteins, and acts in a late step after the SAM complex. The MDM10-MDM12-mmm1 subcomplex further acts in the TOM40-specific pathway after the action of the MDM12-mmm1 complex. Essential for establishing and maintaining the structure of mitochondria and maintenance of mtDNA nucleoids. The protein is Maintenance of mitochondrial morphology protein 1 of Pyrenophora tritici-repentis (strain Pt-1C-BFP) (Wheat tan spot fungus).